Consider the following 349-residue polypeptide: Homeobox-leucine zipper protein HOX5 (349 aa).

Residues 83–142 constitute a DNA-binding region (homeobox); that stretch reads APEKKRRLTAEQVQMLERSFEEENKLEPERKTELARRLGMAPRQVAVWFQNRRARWKTKQ. A leucine-zipper region spans residues 141 to 185; it reads KQLEHDFDRLKAAYDALAADHHALLSDNDRLRAQVISLTEKLQDK. The disordered stretch occupies residues 181 to 253; sequence KLQDKETSPS…GTNDDGDGGA (73 aa). A compositionally biased stretch (low complexity) spans 188 to 198; the sequence is SPSSATITTAA.

The protein belongs to the HD-ZIP homeobox family. Class I subfamily. Homodimer. May form a heterodimer with HOX4. As to expression, expressed in seedlings, roots, leaves, nodes, internodes, flowers and embryo.

It is found in the nucleus. Its function is as follows. Probable transcription activator that binds to the DNA sequence 5'-CAAT[AT]ATTG-3'. This Oryza sativa subsp. japonica (Rice) protein is Homeobox-leucine zipper protein HOX5 (HOX5).